The primary structure comprises 723 residues: Methionine--tRNA ligase (723 aa).

The 'HIGH' region motif lies at 12-22 (PYANGDIHLGH). The Zn(2+) site is built by cysteine 143, cysteine 146, cysteine 156, and cysteine 159. The short motif at 345-349 (KMSKS) is the 'KMSKS' region element. Lysine 348 is a binding site for ATP. Residues 568-604 (PAAATAPAKDAKPAKEAGSQQRHAEKQQHAAGVSETA) are disordered. Positions 612-723 (DFTKVDLRIA…EGAQAGMRVK (112 aa)) constitute a tRNA-binding domain.

This sequence belongs to the class-I aminoacyl-tRNA synthetase family. MetG type 1 subfamily. In terms of assembly, homodimer. Requires Zn(2+) as cofactor.

It localises to the cytoplasm. The catalysed reaction is tRNA(Met) + L-methionine + ATP = L-methionyl-tRNA(Met) + AMP + diphosphate. In terms of biological role, is required not only for elongation of protein synthesis but also for the initiation of all mRNA translation through initiator tRNA(fMet) aminoacylation. The chain is Methionine--tRNA ligase from Azoarcus sp. (strain BH72).